The chain runs to 272 residues: Indole-3-glycerol phosphate synthase (272 aa).

This sequence belongs to the TrpC family.

It carries out the reaction 1-(2-carboxyphenylamino)-1-deoxy-D-ribulose 5-phosphate + H(+) = (1S,2R)-1-C-(indol-3-yl)glycerol 3-phosphate + CO2 + H2O. It participates in amino-acid biosynthesis; L-tryptophan biosynthesis; L-tryptophan from chorismate: step 4/5. In Mycolicibacterium paratuberculosis (strain ATCC BAA-968 / K-10) (Mycobacterium paratuberculosis), this protein is Indole-3-glycerol phosphate synthase.